The chain runs to 72 residues: DNA gyrase inhibitor YacG (72 aa).

4 residues coordinate Zn(2+): cysteine 7, cysteine 10, cysteine 26, and cysteine 30. A disordered region spans residues 44–72 (SIAGEEHTPSSDTARPQLSAEDLALLEQD).

Belongs to the DNA gyrase inhibitor YacG family. In terms of assembly, interacts with GyrB. The cofactor is Zn(2+).

Inhibits all the catalytic activities of DNA gyrase by preventing its interaction with DNA. Acts by binding directly to the C-terminal domain of GyrB, which probably disrupts DNA binding by the gyrase. The polypeptide is DNA gyrase inhibitor YacG (Tolumonas auensis (strain DSM 9187 / NBRC 110442 / TA 4)).